A 112-amino-acid chain; its full sequence is Putative pterin-4-alpha-carbinolamine dehydratase (112 aa).

This sequence belongs to the pterin-4-alpha-carbinolamine dehydratase family.

The catalysed reaction is (4aS,6R)-4a-hydroxy-L-erythro-5,6,7,8-tetrahydrobiopterin = (6R)-L-erythro-6,7-dihydrobiopterin + H2O. In Shewanella oneidensis (strain ATCC 700550 / JCM 31522 / CIP 106686 / LMG 19005 / NCIMB 14063 / MR-1), this protein is Putative pterin-4-alpha-carbinolamine dehydratase.